The primary structure comprises 250 residues: Uracil-DNA glycosylase (250 aa).

D78 serves as the catalytic Proton acceptor. Residues 228–250 (RGQKPVDWSGEQNNASRQGEFAL) are disordered.

It belongs to the uracil-DNA glycosylase (UDG) superfamily. UNG family.

Its subcellular location is the cytoplasm. It catalyses the reaction Hydrolyzes single-stranded DNA or mismatched double-stranded DNA and polynucleotides, releasing free uracil.. In terms of biological role, excises uracil residues from the DNA which can arise as a result of misincorporation of dUMP residues by DNA polymerase or due to deamination of cytosine. In Bordetella pertussis (strain Tohama I / ATCC BAA-589 / NCTC 13251), this protein is Uracil-DNA glycosylase.